The following is a 475-amino-acid chain: ATP synthase subunit beta (475 aa).

Residue 156–163 (GGAGVGKT) participates in ATP binding.

Belongs to the ATPase alpha/beta chains family. In terms of assembly, F-type ATPases have 2 components, CF(1) - the catalytic core - and CF(0) - the membrane proton channel. CF(1) has five subunits: alpha(3), beta(3), gamma(1), delta(1), epsilon(1). CF(0) has three main subunits: a(1), b(2) and c(9-12). The alpha and beta chains form an alternating ring which encloses part of the gamma chain. CF(1) is attached to CF(0) by a central stalk formed by the gamma and epsilon chains, while a peripheral stalk is formed by the delta and b chains.

It localises to the cell membrane. It catalyses the reaction ATP + H2O + 4 H(+)(in) = ADP + phosphate + 5 H(+)(out). Its function is as follows. Produces ATP from ADP in the presence of a proton gradient across the membrane. The catalytic sites are hosted primarily by the beta subunits. The chain is ATP synthase subunit beta from Mycoplasma pneumoniae (strain ATCC 29342 / M129 / Subtype 1) (Mycoplasmoides pneumoniae).